An 89-amino-acid polypeptide reads, in one-letter code: Progonadoliberin-1 (89 aa).

The first 23 residues, 1 to 23 (MKAFPTFALLFLVLLFSAHVSDA), serve as a signal peptide directing secretion. At glutamine 24 the chain carries Pyrrolidone carboxylic acid. A Glycine amide modification is found at glycine 33.

This sequence belongs to the GnRH family. As to expression, expressed in the forebrain from larval stages.

The protein localises to the secreted. Stimulates the secretion of gonadotropins. This Xenopus laevis (African clawed frog) protein is Progonadoliberin-1 (gnrh1).